The sequence spans 250 residues: Proteasome subunit alpha type-4-1 (250 aa).

The protein belongs to the peptidase T1A family. As to quaternary structure, the 26S proteasome consists of a 20S proteasome core and two 19S regulatory subunits. The 20S proteasome core is composed of 28 subunits that are arranged in four stacked rings, resulting in a barrel-shaped structure. The two end rings are each formed by seven alpha subunits, and the two central rings are each formed by seven beta subunits. The catalytic chamber with the active sites is on the inside of the barrel.

It localises to the cytoplasm. It is found in the nucleus. Functionally, the proteasome is a multicatalytic proteinase complex which is characterized by its ability to cleave peptides with Arg, Phe, Tyr, Leu, and Glu adjacent to the leaving group at neutral or slightly basic pH. The proteasome has an ATP-dependent proteolytic activity. The polypeptide is Proteasome subunit alpha type-4-1 (Oryza sativa subsp. indica (Rice)).